The primary structure comprises 1395 residues: uncharacterized protein (1395 aa).

89–96 (AYKKWGKS) provides a ligand contact to ATP. Disordered regions lie at residues 146–166 (EEKIHKKLEGSPSPEAELSPP) and 205–391 (SSSS…MENR). Composition is skewed to low complexity over residues 155–166 (GSPSPEAELSPP) and 205–222 (SSSSSSTAPPASTDTSSP). Residues 230–269 (EVTKERSSEVPTTVHEKTQSKSKNEKENKFSNGTIEEKPA) show a composition bias toward basic and acidic residues. Low complexity predominate over residues 287-301 (SWSSGSSEAGSSSSG). The span at 313–328 (VKVRHKAREIRNKKGR) shows a compositional bias: basic residues. The segment covering 337 to 346 (KHGEKAERNI) has biased composition (basic and acidic residues). The segment covering 349–358 (GSSSSSSSGS) has biased composition (low complexity). The segment covering 369–391 (PLKEIGRKDPGSTEGKDLYMENR) has biased composition (basic and acidic residues). Serine 814 and serine 1080 each carry phosphoserine. The tract at residues 1110 to 1132 (PISASELSPGGGSESEFESEKDE) is disordered. Serine 1194 and serine 1338 each carry phosphoserine. The span at 1346–1359 (TGERDSGAKSDGFR) shows a compositional bias: basic and acidic residues. Residues 1346 to 1395 (TGERDSGAKSDGFRGKMCSSASSTSEETGSEGGGEWVGPSEEELFSRTHL) form a disordered region.

This is an uncharacterized protein from Homo sapiens (Human).